We begin with the raw amino-acid sequence, 452 residues long: Diphthine methyltransferase (452 aa).

7 WD repeats span residues 79–130, 131–185, 186–229, 230–273, 274–313, 314–403, and 404–448; these read PLVE…SHVL, EPLS…RPRL, QKVA…RVPG, KFLF…RNMK, QPLA…LNCQ, KAME…TEGM, and RKNG…HLWE. Ser-353 carries the phosphoserine modification. The tract at residues 371 to 402 is disordered; the sequence is SELPTPCHECREDNDGEGHARPQSGMKPLTEG. The span at 378-390 shows a compositional bias: basic and acidic residues; that stretch reads HECREDNDGEGHA.

This sequence belongs to the DPH7 family. As to quaternary structure, interacts with INCA1.

It catalyses the reaction diphthine methyl ester-[translation elongation factor 2] + H2O = diphthine-[translation elongation factor 2] + methanol + H(+). The protein operates within protein modification; peptidyl-diphthamide biosynthesis. In terms of biological role, catalyzes the demethylation of diphthine methyl ester to form diphthine, an intermediate diphthamide biosynthesis, a post-translational modification of histidine which occurs in translation elongation factor 2 (EEF2) which can be ADP-ribosylated by diphtheria toxin and by Pseudomonas exotoxin A (Eta). The protein is Diphthine methyltransferase (DPH7) of Homo sapiens (Human).